The sequence spans 103 residues: Small ribosomal subunit protein uS10 (103 aa).

Belongs to the universal ribosomal protein uS10 family. Part of the 30S ribosomal subunit.

In terms of biological role, involved in the binding of tRNA to the ribosomes. This Picrophilus torridus (strain ATCC 700027 / DSM 9790 / JCM 10055 / NBRC 100828 / KAW 2/3) protein is Small ribosomal subunit protein uS10.